A 361-amino-acid chain; its full sequence is Chorismate synthase (361 aa).

R48 is an NADP(+) binding site. Residues 125–127 (RSS), 238–239 (NA), G278, 293–297 (KPTSS), and R319 each bind FMN.

This sequence belongs to the chorismate synthase family. In terms of assembly, homotetramer. FMNH2 serves as cofactor.

It catalyses the reaction 5-O-(1-carboxyvinyl)-3-phosphoshikimate = chorismate + phosphate. It participates in metabolic intermediate biosynthesis; chorismate biosynthesis; chorismate from D-erythrose 4-phosphate and phosphoenolpyruvate: step 7/7. Catalyzes the anti-1,4-elimination of the C-3 phosphate and the C-6 proR hydrogen from 5-enolpyruvylshikimate-3-phosphate (EPSP) to yield chorismate, which is the branch point compound that serves as the starting substrate for the three terminal pathways of aromatic amino acid biosynthesis. This reaction introduces a second double bond into the aromatic ring system. This chain is Chorismate synthase, found in Aliivibrio fischeri (strain MJ11) (Vibrio fischeri).